The primary structure comprises 487 residues: 3-octaprenyl-4-hydroxybenzoate carboxy-lyase (487 aa).

Residue Asn172 participates in Mn(2+) binding. Prenylated FMN is bound by residues 175–177, 189–191, and 194–195; these read IYR, RWL, and RG. A Mn(2+)-binding site is contributed by Glu238. The active-site Proton donor is the Asp287.

Belongs to the UbiD family. In terms of assembly, homohexamer. Prenylated FMN serves as cofactor. Mn(2+) is required as a cofactor.

It is found in the cell membrane. It catalyses the reaction a 4-hydroxy-3-(all-trans-polyprenyl)benzoate + H(+) = a 2-(all-trans-polyprenyl)phenol + CO2. Its pathway is cofactor biosynthesis; ubiquinone biosynthesis. Functionally, catalyzes the decarboxylation of 3-octaprenyl-4-hydroxy benzoate to 2-octaprenylphenol, an intermediate step in ubiquinone biosynthesis. This Dechloromonas aromatica (strain RCB) protein is 3-octaprenyl-4-hydroxybenzoate carboxy-lyase.